A 606-amino-acid polypeptide reads, in one-letter code: Aspartate--tRNA(Asp/Asn) ligase (606 aa).

Glutamate 172 lines the L-aspartate pocket. The aspartate stretch occupies residues 196–199 (QLFK). Residue arginine 218 coordinates L-aspartate. Residues 218–220 (RDE) and glutamine 227 contribute to the ATP site. Residue histidine 448 coordinates L-aspartate. An ATP-binding site is contributed by glutamate 482. Arginine 489 serves as a coordination point for L-aspartate. An ATP-binding site is contributed by 534-537 (GWDR).

The protein belongs to the class-II aminoacyl-tRNA synthetase family. Type 1 subfamily. In terms of assembly, homodimer.

It localises to the cytoplasm. It carries out the reaction tRNA(Asx) + L-aspartate + ATP = L-aspartyl-tRNA(Asx) + AMP + diphosphate. In terms of biological role, aspartyl-tRNA synthetase with relaxed tRNA specificity since it is able to aspartylate not only its cognate tRNA(Asp) but also tRNA(Asn). Reaction proceeds in two steps: L-aspartate is first activated by ATP to form Asp-AMP and then transferred to the acceptor end of tRNA(Asp/Asn). The polypeptide is Aspartate--tRNA(Asp/Asn) ligase (Saccharopolyspora erythraea (strain ATCC 11635 / DSM 40517 / JCM 4748 / NBRC 13426 / NCIMB 8594 / NRRL 2338)).